A 122-amino-acid chain; its full sequence is Large ribosomal subunit protein uL14 (122 aa).

It belongs to the universal ribosomal protein uL14 family. Part of the 50S ribosomal subunit. Forms a cluster with proteins L3 and L19. In the 70S ribosome, L14 and L19 interact and together make contacts with the 16S rRNA in bridges B5 and B8.

In terms of biological role, binds to 23S rRNA. Forms part of two intersubunit bridges in the 70S ribosome. The protein is Large ribosomal subunit protein uL14 of Acinetobacter baylyi (strain ATCC 33305 / BD413 / ADP1).